A 159-amino-acid polypeptide reads, in one-letter code: Endoribonuclease YbeY (159 aa).

His-125, His-129, and His-135 together coordinate Zn(2+).

The protein belongs to the endoribonuclease YbeY family. The cofactor is Zn(2+).

The protein localises to the cytoplasm. Single strand-specific metallo-endoribonuclease involved in late-stage 70S ribosome quality control and in maturation of the 3' terminus of the 16S rRNA. The polypeptide is Endoribonuclease YbeY (Lactiplantibacillus plantarum (strain ATCC BAA-793 / NCIMB 8826 / WCFS1) (Lactobacillus plantarum)).